The sequence spans 368 residues: Isopentenyl-diphosphate delta-isomerase (368 aa).

Position 7–8 (7–8 (RK)) interacts with substrate. FMN-binding positions include T65, 66 to 68 (GMT), S96, and N125. Residue 96–98 (SQR) participates in substrate binding. Position 160 (Q160) interacts with substrate. A Mg(2+)-binding site is contributed by E161. FMN contacts are provided by residues K193, S218, T223, 275–277 (GIR), and 296–297 (AL).

This sequence belongs to the IPP isomerase type 2 family. As to quaternary structure, homooctamer. Dimer of tetramers. FMN is required as a cofactor. It depends on NADPH as a cofactor. The cofactor is Mg(2+).

Its subcellular location is the cytoplasm. It carries out the reaction isopentenyl diphosphate = dimethylallyl diphosphate. In terms of biological role, involved in the biosynthesis of isoprenoids. Catalyzes the 1,3-allylic rearrangement of the homoallylic substrate isopentenyl (IPP) to its allylic isomer, dimethylallyl diphosphate (DMAPP). This Saccharolobus solfataricus (strain ATCC 35092 / DSM 1617 / JCM 11322 / P2) (Sulfolobus solfataricus) protein is Isopentenyl-diphosphate delta-isomerase.